The following is an 833-amino-acid chain: Neuronal tyrosine-phosphorylated phosphoinositide-3-kinase adapter 1 (833 aa).

Disordered stretches follow at residues 1–45 (MNLL…PGVR), 64–191 (PASQ…LQRL), 219–423 (VFRG…RELP), 645–674 (EEDGARAWNGSTEGPGKVEHEDRGPVPSGI), and 736–765 (HTPRPCSQPRDALSQTHPVLPLPLPPQPAR). Residues 8 to 25 (TKLEWRQHKEEEAKRSSS) are compositionally biased toward basic and acidic residues. The interval 76-181 (STMAPRSLSC…DESCAPAPSP (106 aa)) is involved in CYFIP1- and NCKAP1-binding. The segment covering 111-120 (PPAKPRRHPS) has biased composition (basic residues). Residues 162–171 (SPNTQLSVSF) show a composition bias toward polar residues. The span at 220 to 239 (FRGGGRSGGGLAGPPLGSGG) shows a compositional bias: gly residues. The segment covering 248–257 (SDSEDSEAIY) has biased composition (acidic residues). Positions 275-285 (GPPPLTAPSPP) are enriched in pro residues.

It belongs to the NYAP family. As to quaternary structure, interacts with ACOT9, ARHGAP26 and PIK3R2. Interacts with components of the WAVE1 complex, CYFIP1 and NCKAP1; this interaction mediates PI3K-WAVE1 association and actin cytoskeleton remodeling. In terms of processing, phosphorylated on tyrosine residues by FYN upon stimulation with CNTN5. Phosphorylation begins at 14 dpc, reaches a peak during perinatal days in brain, then gradually decreases. As to expression, expressed predominantly in brain where it is present in the neurons, but not in astrocytes or oligodendrites.

Activates PI3K and concomitantly recruits the WAVE1 complex to the close vicinity of PI3K and regulates neuronal morphogenesis. This Mus musculus (Mouse) protein is Neuronal tyrosine-phosphorylated phosphoinositide-3-kinase adapter 1 (Nyap1).